We begin with the raw amino-acid sequence, 558 residues long: Potassium-transporting ATPase potassium-binding subunit (558 aa).

12 helical membrane passes run 1–21 (MEII…SGYL), 66–86 (FNGF…WLFL), 127–147 (MIVM…VCIA), 166–186 (IVRF…ILLM), 245–265 (IWSN…MLFL), 281–301 (ALIL…LTMW), 327–347 (FGAG…TGSV), 354–374 (LTPI…VFGG), 377–397 (VGLM…SLMV), 416–436 (IVLV…LAFM), 482–502 (ISTG…QLMI), and 531–551 (IVFI…LGPI).

The protein belongs to the KdpA family. In terms of assembly, the system is composed of three essential subunits: KdpA, KdpB and KdpC.

The protein resides in the cell membrane. Part of the high-affinity ATP-driven potassium transport (or Kdp) system, which catalyzes the hydrolysis of ATP coupled with the electrogenic transport of potassium into the cytoplasm. This subunit binds the extracellular potassium ions and delivers the ions to the membrane domain of KdpB through an intramembrane tunnel. This is Potassium-transporting ATPase potassium-binding subunit from Staphylococcus aureus (strain USA300).